The following is a 249-amino-acid chain: Isoprenyl transferase (249 aa).

Residue aspartate 29 is part of the active site. A Mg(2+)-binding site is contributed by aspartate 29. Substrate-binding positions include 30 to 33 (GNGR), tryptophan 34, arginine 42, histidine 46, and 74 to 76 (STE). Asparagine 77 acts as the Proton acceptor in catalysis. Residues tryptophan 78, arginine 80, arginine 197, and 203–205 (RLS) contribute to the substrate site. A Mg(2+)-binding site is contributed by glutamate 216.

The protein belongs to the UPP synthase family. Homodimer. The cofactor is Mg(2+).

Catalyzes the condensation of isopentenyl diphosphate (IPP) with allylic pyrophosphates generating different type of terpenoids. This Gloeobacter violaceus (strain ATCC 29082 / PCC 7421) protein is Isoprenyl transferase.